We begin with the raw amino-acid sequence, 346 residues long: MSSTKDMSTVQNATPFNGVAPSTTVRVTIVQSSTVYNDTPATIDKAEKYIVEAASKGAELVLFPEGFIGGYPRGFRFGLAVGVHNEEGRDEFRKYHASAIHVPGPEVARLADVARKNHVYLVMGAIEKEGYTLYCTVLFFSPQGQFLGKHRKLMPTSLERCIWGQGDGSTIPVYDTPIGKLGAAICWENRMPLYRTALYAKGIELYCAPTADGSKEWQSSMLHIAIEGGCFVLSACQFCQRKHFPDHPDYLFTDWYDDKEHDSIVSQGGSVIISPLGQVLAGPNFESEGLVTADIDLGDIARAKLYFDSVGHYSRPDVLHLTVNEHPRKSVTFVTKVEKAEDDSNK.

Position 2 is an N-acetylserine (S2). The 273-residue stretch at 25-297 folds into the CN hydrolase domain; sequence VRVTIVQSST…EGLVTADIDL (273 aa). Catalysis depends on E65, which acts as the Proton acceptor. The active-site Proton donor is K152. Catalysis depends on C186, which acts as the Nucleophile.

The protein belongs to the carbon-nitrogen hydrolase superfamily. Nitrilase family. As to quaternary structure, interacts with DEK3. In terms of tissue distribution, expressed in cotyledons, hypocotyls, leaves, roots, stems, flowers and siliques.

It carries out the reaction a nitrile + 2 H2O = a carboxylate + NH4(+). In terms of biological role, can convert indole-3-acetonitrile to the plant hormone indole-3-acetic acid. This Arabidopsis thaliana (Mouse-ear cress) protein is Nitrilase 1.